Here is a 212-residue protein sequence, read N- to C-terminus: Thiamine-phosphate synthase (212 aa).

4-amino-2-methyl-5-(diphosphooxymethyl)pyrimidine contacts are provided by residues 39–41 and asparagine 71; that span reads QLR. The Mg(2+) site is built by aspartate 72 and aspartate 91. Serine 110 is a binding site for 4-amino-2-methyl-5-(diphosphooxymethyl)pyrimidine. 2-[(2R,5Z)-2-carboxy-4-methylthiazol-5(2H)-ylidene]ethyl phosphate is bound at residue 136 to 138; it reads TGT. Residue lysine 139 coordinates 4-amino-2-methyl-5-(diphosphooxymethyl)pyrimidine. Residues glycine 167 and 187–188 contribute to the 2-[(2R,5Z)-2-carboxy-4-methylthiazol-5(2H)-ylidene]ethyl phosphate site; that span reads VS.

Belongs to the thiamine-phosphate synthase family. The cofactor is Mg(2+).

The enzyme catalyses 2-[(2R,5Z)-2-carboxy-4-methylthiazol-5(2H)-ylidene]ethyl phosphate + 4-amino-2-methyl-5-(diphosphooxymethyl)pyrimidine + 2 H(+) = thiamine phosphate + CO2 + diphosphate. The catalysed reaction is 2-(2-carboxy-4-methylthiazol-5-yl)ethyl phosphate + 4-amino-2-methyl-5-(diphosphooxymethyl)pyrimidine + 2 H(+) = thiamine phosphate + CO2 + diphosphate. It carries out the reaction 4-methyl-5-(2-phosphooxyethyl)-thiazole + 4-amino-2-methyl-5-(diphosphooxymethyl)pyrimidine + H(+) = thiamine phosphate + diphosphate. It participates in cofactor biosynthesis; thiamine diphosphate biosynthesis; thiamine phosphate from 4-amino-2-methyl-5-diphosphomethylpyrimidine and 4-methyl-5-(2-phosphoethyl)-thiazole: step 1/1. In terms of biological role, condenses 4-methyl-5-(beta-hydroxyethyl)thiazole monophosphate (THZ-P) and 2-methyl-4-amino-5-hydroxymethyl pyrimidine pyrophosphate (HMP-PP) to form thiamine monophosphate (TMP). The chain is Thiamine-phosphate synthase from Azorhizobium caulinodans (strain ATCC 43989 / DSM 5975 / JCM 20966 / LMG 6465 / NBRC 14845 / NCIMB 13405 / ORS 571).